Reading from the N-terminus, the 256-residue chain is 5'-nucleotidase YutF (256 aa).

This sequence belongs to the HAD-like hydrolase superfamily. NagD family. Homodimer. It depends on Mg(2+) as a cofactor.

Its subcellular location is the cytoplasm. It catalyses the reaction a ribonucleoside 5'-phosphate + H2O = a ribonucleoside + phosphate. The catalysed reaction is XMP + H2O = xanthosine + phosphate. Functionally, catalyzes the hydrolysis of various purine and pyrimidine 5'-nucleotides, showing preference for 5'-nucleoside monophosphates and exhibiting the highest catalytic activity toward 5'-XMP. Also shows a relatively high phosphohydrolase activity toward the nucleotide precursors ribose-5-phosphate (R5P) and 5-phosphoribosyl-1-pyrophosphate (PRPP), and toward the non-natural substrate p-nitrophenyl phosphate (pNPP). The polypeptide is 5'-nucleotidase YutF (yutF) (Bacillus subtilis (strain 168)).